A 207-amino-acid chain; its full sequence is Superoxide dismutase [Mn] (207 aa).

4 residues coordinate Mn(2+): histidine 28, histidine 76, aspartate 160, and histidine 164.

Belongs to the iron/manganese superoxide dismutase family. Homotetramer. Mn(2+) is required as a cofactor.

It is found in the secreted. The catalysed reaction is 2 superoxide + 2 H(+) = H2O2 + O2. Destroys superoxide anion radicals which are normally produced within the cells and which are toxic to biological systems. The protein is Superoxide dismutase [Mn] (sodA) of Mycolicibacterium smegmatis (Mycobacterium smegmatis).